The following is a 487-amino-acid chain: Glutamyl-tRNA(Gln) amidotransferase subunit A (487 aa).

Active-site charge relay system residues include K78 and S153. The active-site Acyl-ester intermediate is S177.

The protein belongs to the amidase family. GatA subfamily. Heterotrimer of A, B and C subunits.

The enzyme catalyses L-glutamyl-tRNA(Gln) + L-glutamine + ATP + H2O = L-glutaminyl-tRNA(Gln) + L-glutamate + ADP + phosphate + H(+). Its function is as follows. Allows the formation of correctly charged Gln-tRNA(Gln) through the transamidation of misacylated Glu-tRNA(Gln) in organisms which lack glutaminyl-tRNA synthetase. The reaction takes place in the presence of glutamine and ATP through an activated gamma-phospho-Glu-tRNA(Gln). This Oleidesulfovibrio alaskensis (strain ATCC BAA-1058 / DSM 17464 / G20) (Desulfovibrio alaskensis) protein is Glutamyl-tRNA(Gln) amidotransferase subunit A.